Reading from the N-terminus, the 414-residue chain is MSEYIRVTEDENDEPIEIPSEDDGTVLLSTVTAQFPGACGLRYRNPVSQCMWGVRLVEGILHAPEAGWGNLVYVVNYPKDNKRKMDETDASSAVKVKRAVQKTSDLIVLGLPWKTTEQDLKEYFSTFGEVLMVQVKKDIKTGHSKGFGFVRFTDYETQVKVMSQRHMIDGRWCDCKLPNSKQSPDEPLRSRKVFVGRCTEDMTADELQQFFAQYGEVVDVFIPKPFRAFAFVTFADDQVAQSLCGEDLIIKGISVHISNAEPKHNSNRQLERGGRFGGNPGGFGNQGGFGNSRGGGGGLGNNQGSNMGGGMNFGAFSINPAMMAAAQAALQSSWGMMGMLASQQNQSGPSGNNQPQGNMQREQNQGFSSGNNSYGGSNSGAAIGWGSASNAGSSSGFNGGFGSSMDSKSSGWGM.

RRM domains lie at 104-200 and 191-262; these read SDLI…RCTE and RKVF…NAEP. Basic and acidic residues predominate over residues 261–274; that stretch reads EPKHNSNRQLERGG. 2 disordered regions span residues 261–303 and 341–373; these read EPKH…GNNQ and ASQQNQSGPSGNNQPQGNMQREQNQGFSSGNNS. A compositionally biased stretch (gly residues) spans 275–303; it reads RFGGNPGGFGNQGGFGNSRGGGGGLGNNQ. Residues 342-373 are compositionally biased toward low complexity; sequence SQQNQSGPSGNNQPQGNMQREQNQGFSSGNNS.

In terms of assembly, homodimer.

Its subcellular location is the nucleus. The protein resides in the cytoplasm. The protein localises to the stress granule. It is found in the mitochondrion. Functionally, probably involved in transcriptional repression. May play a role in the maintenance of the circadian clock periodicity. This chain is TAR DNA-binding protein 43 (TARDBP), found in Gallus gallus (Chicken).